Reading from the N-terminus, the 317-residue chain is MAKKVGVLLFIDLQPLPDSVEQWVKKTYHAELSGGATLQIVFNTQEACKLDVGTSVEAVVSLMHTPGRHSPSFLAEVARVLNPGGSFLVLEPLLVETQEQKYSSTQTNAGLERNLLLAGFVNSEVDFVTGVEIAKACTTSSVALNLVAVKSKKPSWDSASVFQLRKGSSQKGRARTNGNHQPVKFTAGDVMDDVLSMSKSVVKLDLTSNFKDDDEELIDEDDLLTEEDLKAPEIPKAESCAPTKKACKNCTCGRAELEEKEEETKLTAAQINNPTSSCGSCGLGDAFRCAGCPYRGMPTFKLGEKITLGESWLVADA.

The N-terminal SAM-like domain stretch occupies residues 1-162 (MAKKVGVLLF…KPSWDSASVF (162 aa)). The tract at residues 163–229 (QLRKGSSQKG…EDDLLTEEDL (67 aa)) is linker. Residues cysteine 240, cysteine 247, cysteine 250, and cysteine 252 each coordinate [2Fe-2S] cluster. Residues 240–252 (CAPTKKACKNCTC) are fe-S binding site A. Residues cysteine 278, cysteine 281, cysteine 289, and cysteine 292 each contribute to the [4Fe-4S] cluster site. Short sequence motifs (cx2C motif) lie at residues 278 to 281 (CGSC) and 289 to 292 (CAGC). The interval 278–292 (CGSCGLGDAFRCAGC) is fe-S binding site B.

This sequence belongs to the anamorsin family. In terms of assembly, monomer. The cofactor is [2Fe-2S] cluster. [4Fe-4S] cluster serves as cofactor.

It localises to the cytoplasm. The protein resides in the mitochondrion intermembrane space. Component of the cytosolic iron-sulfur (Fe-S) protein assembly (CIA) machinery. Required for the maturation of extramitochondrial Fe-S proteins. Part of an electron transfer chain functioning in an early step of cytosolic Fe-S biogenesis, facilitating the de novo assembly of a [4Fe-4S] cluster on the cytosolic Fe-S scaffold complex. Electrons are transferred from NADPH via a FAD- and FMN-containing diflavin oxidoreductase. Together with the diflavin oxidoreductase, also required for the assembly of the diferric tyrosyl radical cofactor of ribonucleotide reductase (RNR), probably by providing electrons for reduction during radical cofactor maturation in the catalytic small subunit. This Physcomitrium patens (Spreading-leaved earth moss) protein is Anamorsin homolog 2.